The sequence spans 600 residues: Elongation factor 4 (600 aa).

One can recognise a tr-type G domain in the interval 3 to 185; sequence KYIRNFSIIA…CLIHDIPHPQ (183 aa). GTP contacts are provided by residues 15–20 and 132–135; these read DHGKST and NKID.

The protein belongs to the TRAFAC class translation factor GTPase superfamily. Classic translation factor GTPase family. LepA subfamily.

It localises to the cell inner membrane. It catalyses the reaction GTP + H2O = GDP + phosphate + H(+). Its function is as follows. Required for accurate and efficient protein synthesis under certain stress conditions. May act as a fidelity factor of the translation reaction, by catalyzing a one-codon backward translocation of tRNAs on improperly translocated ribosomes. Back-translocation proceeds from a post-translocation (POST) complex to a pre-translocation (PRE) complex, thus giving elongation factor G a second chance to translocate the tRNAs correctly. Binds to ribosomes in a GTP-dependent manner. This Blochmanniella pennsylvanica (strain BPEN) protein is Elongation factor 4.